Consider the following 344-residue polypeptide: MLSLKLPQLLQVHQVPRVFWEDGIMSGYRRPTSSALDCVLSSFQMTNETVNIWTHFLPTWYFLWRLLALAGGPGFRAEPYHWPLLVFLLPACLYPFASCCAHTFSSMSPRMRHICYFLDYGALSLYSLGCAFPYAAYSMPASWLHGHLHQFFVPAAALNSFLCTGLSCYSRFLELESPGLSKVLRTGAFAYPFLFDNLPLFYRLGLCWGRGHGCGQEALSTSHGYHLFCALLTGFLFASHLPERLAPGRFDYIGHSHQLFHICAVLGTHFQLEAVLADMGSRRAWLATQEPALGLAGTVATLVLAAAGNLLIIAAFTATLLRAPSTCPLLQGGPLEGGTQAKQQ.

Over 1–51 (MLSLKLPQLLQVHQVPRVFWEDGIMSGYRRPTSSALDCVLSSFQMTNETVN) the chain is Cytoplasmic. A helical membrane pass occupies residues 52-72 (IWTHFLPTWYFLWRLLALAGG). Residues 73–83 (PGFRAEPYHWP) lie on the Extracellular side of the membrane. Residues 84–104 (LLVFLLPACLYPFASCCAHTF) traverse the membrane as a helical segment. Residues 105-113 (SSMSPRMRH) are Cytoplasmic-facing. A helical transmembrane segment spans residues 114–134 (ICYFLDYGALSLYSLGCAFPY). Over 135-147 (AAYSMPASWLHGH) the chain is Extracellular. A helical transmembrane segment spans residues 148-168 (LHQFFVPAAALNSFLCTGLSC). The Cytoplasmic portion of the chain corresponds to 169-217 (YSRFLELESPGLSKVLRTGAFAYPFLFDNLPLFYRLGLCWGRGHGCGQE). A helical membrane pass occupies residues 218 to 238 (ALSTSHGYHLFCALLTGFLFA). Topologically, residues 239–258 (SHLPERLAPGRFDYIGHSHQ) are extracellular. Residues 259-279 (LFHICAVLGTHFQLEAVLADM) form a helical membrane-spanning segment. Residues 280–292 (GSRRAWLATQEPA) are Cytoplasmic-facing. A helical membrane pass occupies residues 293 to 313 (LGLAGTVATLVLAAAGNLLII). At 314-344 (AAFTATLLRAPSTCPLLQGGPLEGGTQAKQQ) the chain is on the extracellular side.

It belongs to the ADIPOR family. In terms of assembly, homodimer. As to expression, brain specific. Highly expressed in the hypothalamus, also expressed in forebrain, amygdala, corpus callosum and spinal cord.

Its subcellular location is the cell membrane. Plasma membrane progesterone (P4) receptor coupled to G proteins. Seems to act through a G(s) mediated pathway. Involved in neurosteroid inhibition of apoptosis. May be involved in regulating rapid P4 signaling in the nervous system. Also binds dehydroepiandrosterone (DHEA), pregnanolone, pregnenolone and allopregnanolone. In Homo sapiens (Human), this protein is Membrane progestin receptor delta.